The chain runs to 238 residues: Ribonuclease PH (238 aa).

Residues Arg-86 and 124-126 (GTR) each bind phosphate.

It belongs to the RNase PH family. As to quaternary structure, homohexameric ring arranged as a trimer of dimers.

It carries out the reaction tRNA(n+1) + phosphate = tRNA(n) + a ribonucleoside 5'-diphosphate. Phosphorolytic 3'-5' exoribonuclease that plays an important role in tRNA 3'-end maturation. Removes nucleotide residues following the 3'-CCA terminus of tRNAs; can also add nucleotides to the ends of RNA molecules by using nucleoside diphosphates as substrates, but this may not be physiologically important. Probably plays a role in initiation of 16S rRNA degradation (leading to ribosome degradation) during starvation. The polypeptide is Ribonuclease PH (Vibrio parahaemolyticus serotype O3:K6 (strain RIMD 2210633)).